A 435-amino-acid chain; its full sequence is Arginine/serine-rich coiled-coil protein 2 (435 aa).

The span at 1–27 shows a compositional bias: basic and acidic residues; the sequence is MAASDTERDGLAPEKTSPDRDKKKEQS. The tract at residues 1–230 is disordered; the sequence is MAASDTERDG…PSPPPFRGRN (230 aa). Position 2 is an N-acetylalanine (A2). Residue S4 is modified to Phosphoserine. 2 positions are modified to phosphothreonine: T6 and T16. A phosphoserine mark is found at S17, S30, and S32. The segment covering 35-51 has biased composition (basic residues); it reads ASKHHYSRSRSRSRERK. The segment covering 66-111 has biased composition (basic and acidic residues); sequence RSKEARRHESKDKSSKKHKSEEHNDKEHSSDKGRERLNSSENGEDR. The residue at position 104 (S104) is a Phosphoserine. Residues 112-214 are compositionally biased toward basic residues; that stretch reads HKRKERKSSR…KRIEKPRRFS (103 aa). Residues 230–270 adopt a coiled-coil conformation; it reads NTAMDAQEALARRLERAKKLQEQREKEMVEKQKQQEIAAAA. K376 participates in a covalent cross-link: Glycyl lysine isopeptide (Lys-Gly) (interchain with G-Cter in SUMO1); alternate. Residue K376 forms a Glycyl lysine isopeptide (Lys-Gly) (interchain with G-Cter in SUMO2); alternate linkage. S377 carries the phosphoserine modification.

It belongs to the RSRC2 family.

The polypeptide is Arginine/serine-rich coiled-coil protein 2 (RSRC2) (Pongo abelii (Sumatran orangutan)).